A 555-amino-acid chain; its full sequence is Potassium-transporting ATPase potassium-binding subunit (555 aa).

The next 10 helical transmembrane spans lie at 2–22 (IWVA…PTGI), 60–80 (QYAL…YFIF), 130–150 (IGIT…VMAF), 173–193 (VFLP…VPQT), 246–266 (MSNI…PFTY), 278–298 (ILFV…TTSE), 374–394 (AGFV…GLMV), 412–432 (LIAV…ALAL), 483–503 (LVMF…AASL), and 525–545 (GIFI…MLVL).

It belongs to the KdpA family. As to quaternary structure, the system is composed of three essential subunits: KdpA, KdpB and KdpC.

It is found in the cell membrane. Functionally, part of the high-affinity ATP-driven potassium transport (or Kdp) system, which catalyzes the hydrolysis of ATP coupled with the electrogenic transport of potassium into the cytoplasm. This subunit binds the extracellular potassium ions and delivers the ions to the membrane domain of KdpB through an intramembrane tunnel. This Bacillus mycoides (strain KBAB4) (Bacillus weihenstephanensis) protein is Potassium-transporting ATPase potassium-binding subunit.